Consider the following 219-residue polypeptide: Protein-L-isoaspartate O-methyltransferase (219 aa).

The active site involves serine 66.

The protein belongs to the methyltransferase superfamily. L-isoaspartyl/D-aspartyl protein methyltransferase family.

The protein resides in the cytoplasm. The catalysed reaction is [protein]-L-isoaspartate + S-adenosyl-L-methionine = [protein]-L-isoaspartate alpha-methyl ester + S-adenosyl-L-homocysteine. Catalyzes the methyl esterification of L-isoaspartyl residues in peptides and proteins that result from spontaneous decomposition of normal L-aspartyl and L-asparaginyl residues. It plays a role in the repair and/or degradation of damaged proteins. The polypeptide is Protein-L-isoaspartate O-methyltransferase (Xanthobacter autotrophicus (strain ATCC BAA-1158 / Py2)).